The primary structure comprises 120 residues: NAD(P)H-quinone oxidoreductase subunit 3 (120 aa).

Helical transmembrane passes span 10–30, 64–84, and 89–109; these read FLGF…TNLI, MFAL…PWAV, and LGLL…IALA.

Belongs to the complex I subunit 3 family. As to quaternary structure, NDH-1 can be composed of about 15 different subunits; different subcomplexes with different compositions have been identified which probably have different functions.

The protein localises to the cellular thylakoid membrane. The enzyme catalyses a plastoquinone + NADH + (n+1) H(+)(in) = a plastoquinol + NAD(+) + n H(+)(out). It carries out the reaction a plastoquinone + NADPH + (n+1) H(+)(in) = a plastoquinol + NADP(+) + n H(+)(out). NDH-1 shuttles electrons from an unknown electron donor, via FMN and iron-sulfur (Fe-S) centers, to quinones in the respiratory and/or the photosynthetic chain. The immediate electron acceptor for the enzyme in this species is believed to be plastoquinone. Couples the redox reaction to proton translocation, and thus conserves the redox energy in a proton gradient. Cyanobacterial NDH-1 also plays a role in inorganic carbon-concentration. This chain is NAD(P)H-quinone oxidoreductase subunit 3, found in Prochlorococcus marinus subsp. pastoris (strain CCMP1986 / NIES-2087 / MED4).